A 1130-amino-acid polypeptide reads, in one-letter code: Putative protein tag-278 (1130 aa).

Disordered regions lie at residues 1–92, 104–129, and 974–1130; these read MSRS…DIDN, VARE…ELKR, and NELI…AWKF. Coiled-coil stretches lie at residues 121-779 and 805-1061; these read AGRE…EEIK and EERE…ARAK. Residues 983–993 are compositionally biased toward basic and acidic residues; the sequence is RQTDESTSEPH. Over residues 999 to 1011 the composition is skewed to polar residues; it reads SITSHGVFQNFVS. Basic and acidic residues-rich tracts occupy residues 1013–1057 and 1068–1081; these read MKDK…EKSP and RLRD…KSDN. Residues 1082-1095 show a composition bias toward low complexity; it reads LESTPSSSSRNLLS. The segment covering 1116–1130 has biased composition (basic and acidic residues); that stretch reads TKKDSSSEKRPAWKF.

This Caenorhabditis elegans protein is Putative protein tag-278 (tag-278).